Consider the following 149-residue polypeptide: Large ribosomal subunit protein bL9 (149 aa).

The protein belongs to the bacterial ribosomal protein bL9 family.

Binds to the 23S rRNA. This chain is Large ribosomal subunit protein bL9, found in Desulforamulus reducens (strain ATCC BAA-1160 / DSM 100696 / MI-1) (Desulfotomaculum reducens).